The sequence spans 123 residues: Small ribosomal subunit protein uS12c (123 aa).

The protein belongs to the universal ribosomal protein uS12 family. In terms of assembly, part of the 30S ribosomal subunit.

The protein localises to the plastid. It is found in the chloroplast. With S4 and S5 plays an important role in translational accuracy. Located at the interface of the 30S and 50S subunits. The chain is Small ribosomal subunit protein uS12c (rps12) from Chara vulgaris (Common stonewort).